Consider the following 110-residue polypeptide: Large ribosomal subunit protein uL22 (110 aa).

This sequence belongs to the universal ribosomal protein uL22 family. Part of the 50S ribosomal subunit.

This protein binds specifically to 23S rRNA; its binding is stimulated by other ribosomal proteins, e.g. L4, L17, and L20. It is important during the early stages of 50S assembly. It makes multiple contacts with different domains of the 23S rRNA in the assembled 50S subunit and ribosome. In terms of biological role, the globular domain of the protein is located near the polypeptide exit tunnel on the outside of the subunit, while an extended beta-hairpin is found that lines the wall of the exit tunnel in the center of the 70S ribosome. This Aliarcobacter butzleri (strain RM4018) (Arcobacter butzleri) protein is Large ribosomal subunit protein uL22.